The sequence spans 443 residues: EGF-containing fibulin-like extracellular matrix protein 2 (443 aa).

An N-terminal signal peptide occupies residues 1-23; sequence MLPCASCLPGSLLLWALLLLLLG. The 46-residue stretch at 36-81 folds into the EGF-like 1; atypical domain; that stretch reads YTECTDGYEWDPDSQHCRDVNECLTIPEACKGEMKCINHYGGYLCL. Intrachain disulfides connect Cys-58–Cys-121, Cys-65–Cys-80, Cys-71–Cys-109, Cys-127–Cys-140, Cys-134–Cys-149, Cys-151–Cys-162, Cys-168–Cys-177, Cys-173–Cys-186, Cys-188–Cys-201, Cys-207–Cys-217, Cys-213–Cys-226, Cys-228–Cys-241, Cys-247–Cys-258, Cys-254–Cys-267, Cys-269–Cys-281, Cys-287–Cys-300, Cys-294–Cys-309, and Cys-315–Cys-327. An EGF-like 2; calcium-binding domain is found at 123–163; that stretch reads DVDECAQALHDCRPSQDCHNLPGSYQCTCPDGYRKIGPECV. Residues 164 to 202 enclose the EGF-like 3; calcium-binding domain; that stretch reads DIDECRYRYCQHRCVNLPGSFRCQCEPGFQLGPNNRSCV. The N-linked (GlcNAc...) asparagine glycan is linked to Asn-198. One can recognise an EGF-like 4; calcium-binding domain in the interval 203 to 242; sequence DVNECDMGAPCEQRCFNSYGTFLCRCHQGYELHRDGFSCS. Positions 243–282 constitute an EGF-like 5; calcium-binding domain; sequence DIDECSYSSYLCQYRCINEPGRFSCHCPQGYQLLATRLCQ. The EGF-like 6; calcium-binding domain occupies 283–328; sequence DIDECESGAHQCSEAQTCVNFHGGYRCVDTNRCVEPYIQVSENRCL. N-linked (GlcNAc...) asparagine glycosylation occurs at Asn-394.

It belongs to the fibulin family. In terms of assembly, homodimer; disulfide-linked. Multimer; allows heparin binding. Monomer. Interacts with FBN1 (via N-terminal domain); this interaction inhibits EFEMP2 binding to LOX and ELN. Interacts with LOX (via propeptide); this interaction is strong and facilitates formation of ternary complexes with ELN during elastic fiber assembly; this interaction limits interaction of EFEMP2 with FBLN5. Interacts with PITX2. Interacts with ELN with moderate affinity; this interaction regulates ELN self-assembly maturation stage. Interacts with FBLN5 with moderate affinity. Interacts with LOXL1 (via propeptide), LTBP1 and TGFB1 stronger than with LOXL2 and LTBP3. Interacts with PCOLCE. Interacts with collagen type IV trimer (COL4A1-COL4A1-COL4A2), NID2 and moderately with COL15A1-derived endostatin. Interacts with EMILIN1; this interaction promotes the incorporation of EFEMP2 into the extracellular matrix. Interacts with LTBP4; the LTBP4 long form (LTBP4L) has a stronger binding affinity than the LTBP4 short form and the LTBP4 long form promotes fibrillar deposition of EFEMP2. In terms of processing, N-glycosylated; contains mostly complex-type glycans. Not O-glycosylated. Cleaved by ELANE; produces a 50-55 kDa fragment. Cleaved by MMP2 and MMP9; produces several fragments.

It localises to the secreted. Its subcellular location is the extracellular space. The protein localises to the extracellular matrix. It is found in the basement membrane. Its function is as follows. Plays a crucial role in elastic fiber formation in tissue, and in the formation of ultrastructural connections between elastic laminae and smooth muscle cells in the aorta, therefore participates in terminal differentiation and maturation of smooth muscle cell (SMC) and in the mechanical properties and wall integrity maintenance of the aorta. In addition, is involved in the control of collagen fibril assembly in tissue throught proteolytic activation of LOX leading to cross- linking of collagen and elastin. Also promotes ELN coacervation and participates in the deposition of ELN coacervates on to microfibrils but also regulates ELN cross- linking through LOX interaction. Moreover adheres to the cells through heparin binding in a calcium-dependent manner and regulates vascularlar smooth muscle cells proliferation through angiotensin signaling. This is EGF-containing fibulin-like extracellular matrix protein 2 from Homo sapiens (Human).